Here is a 287-residue protein sequence, read N- to C-terminus: Transmembrane protein 163 (287 aa).

The segment at 1–63 (METAAGSERR…ESGQFSDGLE (63 aa)) is disordered. Residues 1–86 (METAAGSERR…HEAQNYRKKA (86 aa)) lie on the Cytoplasmic side of the membrane. Phosphoserine is present on residues Ser-11, Ser-53, Ser-55, and Ser-59. The segment at 40–70 (EPPQPEEERQLRISESGQFSDGLEDRGLLES) is required for interaction with MCOLN1. The helical transmembrane segment at 87–107 (LWVSWFSIIVTLALAVAAFTV) threads the bilayer. Topologically, residues 108-114 (SVMRYSA) are extracellular. Residues 115–135 (SAFGFAFDAILDVLSSAIVLW) traverse the membrane as a helical segment. Residues 136-148 (RYSNAAAVHSAHR) lie on the Cytoplasmic side of the membrane. A helical membrane pass occupies residues 149-169 (EYIACVILGVIFLLSSVCIVV). Topologically, residues 170–185 (KAIHDLSTKLLPEVDD) are extracellular. A helical transmembrane segment spans residues 186 to 206 (FLFSVSILSGILCSILAVLKF). Topologically, residues 207–215 (MLGKVLTSR) are cytoplasmic. The chain crosses the membrane as a helical span at residues 216 to 236 (ALITDGFNSLVGGVMGFSILL). At 237-253 (SAEVFKHNSAVWYLDGS) the chain is on the extracellular side. The chain crosses the membrane as a helical span at residues 254 to 274 (IGVLIGLTIFAYGVKLLIDMV). The Cytoplasmic segment spans residues 275–287 (PRVRQTRHYEMFE).

The protein belongs to the TMEM163 family. Homodimer. Interacts with MCOLN1/TRPML1. Interacts with SLC30A1, SLC30A2, SLC30A3 and SLC30A4.

It is found in the cytoplasmic vesicle. It localises to the secretory vesicle. The protein resides in the synaptic vesicle membrane. Its subcellular location is the early endosome membrane. The protein localises to the late endosome membrane. It is found in the lysosome membrane. It localises to the cell membrane. The enzyme catalyses Zn(2+)(in) = Zn(2+)(out). Its function is as follows. Zinc ion transporter that mediates zinc efflux and plays a crucial role in intracellular zinc homeostasis. Binds the divalent cations Zn(2+), Ni(2+), and to a minor extent Cu(2+). Is a functional modulator of P2X purinoceptors, including P2RX1, P2RX3, P2RX4 and P2RX7. Plays a role in central nervous system development and is required for myelination, and survival and proliferation of oligodendrocytes. The chain is Transmembrane protein 163 (TMEM163) from Bos taurus (Bovine).